The following is an 878-amino-acid chain: Alanine--tRNA ligase (878 aa).

Residues histidine 568, histidine 572, cysteine 669, and histidine 673 each contribute to the Zn(2+) site.

The protein belongs to the class-II aminoacyl-tRNA synthetase family. Requires Zn(2+) as cofactor.

It is found in the cytoplasm. The enzyme catalyses tRNA(Ala) + L-alanine + ATP = L-alanyl-tRNA(Ala) + AMP + diphosphate. In terms of biological role, catalyzes the attachment of alanine to tRNA(Ala) in a two-step reaction: alanine is first activated by ATP to form Ala-AMP and then transferred to the acceptor end of tRNA(Ala). Also edits incorrectly charged Ser-tRNA(Ala) and Gly-tRNA(Ala) via its editing domain. This is Alanine--tRNA ligase from Polaromonas sp. (strain JS666 / ATCC BAA-500).